The following is a 782-amino-acid chain: Formin-like protein 9 (782 aa).

The first 24 residues, methionine 1 to alanine 24, serve as a signal peptide directing secretion. The chain crosses the membrane as a helical span at residues leucine 102 to phenylalanine 122. Disordered stretches follow at residues aspartate 191–glutamate 223, methionine 264–valine 287, and serine 387–valine 407. Acidic residues predominate over residues glutamate 214–glutamate 223. Over residues alanine 396 to valine 407 the composition is skewed to pro residues. In terms of domain architecture, FH2 spans leucine 406–aspartate 782.

It belongs to the formin-like family. Class-I subfamily.

It is found in the membrane. In terms of biological role, might be involved in the organization and polarity of the actin cytoskeleton. The chain is Formin-like protein 9 (FH9) from Arabidopsis thaliana (Mouse-ear cress).